We begin with the raw amino-acid sequence, 623 residues long: Glutathione import ATP-binding protein GsiA (623 aa).

ABC transporter domains lie at 15 to 269 and 325 to 564; these read VSGL…QTLL and LRSG…RKLM. Residues 49–56 and 357–364 contribute to the ATP site; these read GESGSGKS.

This sequence belongs to the ABC transporter superfamily. Glutathione importer (TC 3.A.1.5.11) family. In terms of assembly, the complex is composed of two ATP-binding proteins (GsiA), two transmembrane proteins (GsiC and GsiD) and a solute-binding protein (GsiB).

Its subcellular location is the cell inner membrane. It catalyses the reaction glutathione(out) + ATP + H2O = glutathione(in) + ADP + phosphate + H(+). Its function is as follows. Part of the ABC transporter complex GsiABCD involved in glutathione import. Responsible for energy coupling to the transport system. The protein is Glutathione import ATP-binding protein GsiA of Salmonella typhimurium (strain LT2 / SGSC1412 / ATCC 700720).